We begin with the raw amino-acid sequence, 39 residues long: Cytochrome b6-f complex subunit 5 (39 aa).

The chain crosses the membrane as a helical span at residues 5 to 25; sequence LLCGIVLGLVPVTLLGLFVSA.

It belongs to the PetG family. In terms of assembly, the 4 large subunits of the cytochrome b6-f complex are cytochrome b6, subunit IV (17 kDa polypeptide, PetD), cytochrome f and the Rieske protein, while the 4 small subunits are PetG, PetL, PetM and PetN. The complex functions as a dimer.

The protein localises to the cellular thylakoid membrane. Functionally, component of the cytochrome b6-f complex, which mediates electron transfer between photosystem II (PSII) and photosystem I (PSI), cyclic electron flow around PSI, and state transitions. PetG is required for either the stability or assembly of the cytochrome b6-f complex. This is Cytochrome b6-f complex subunit 5 from Prochlorococcus marinus (strain NATL1A).